Here is a 615-residue protein sequence, read N- to C-terminus: Delta-like protein B (615 aa).

Positions 1-20 (MAHLSLYCLLSVSLLQLVAS) are cleaved as a signal peptide. The Extracellular segment spans residues 21 to 522 (SGVFELKVHS…VGQTSPSAVA (502 aa)). The DSL domain occupies 159–203 (VFCDEFYFGEACSDYCRPRDDTLGHYTCDENGNKECLVGWQGDYC). Cystine bridges form between cysteine 161–cysteine 170, cysteine 174–cysteine 186, cysteine 194–cysteine 203, cysteine 208–cysteine 219, cysteine 212–cysteine 225, cysteine 227–cysteine 236, cysteine 245–cysteine 250, cysteine 258–cysteine 267, cysteine 274–cysteine 286, cysteine 280–cysteine 296, cysteine 298–cysteine 307, cysteine 314–cysteine 325, cysteine 319–cysteine 334, cysteine 336–cysteine 345, cysteine 352–cysteine 363, cysteine 357–cysteine 373, cysteine 375–cysteine 384, cysteine 391–cysteine 402, cysteine 396–cysteine 411, cysteine 413–cysteine 422, cysteine 429–cysteine 440, cysteine 434–cysteine 449, cysteine 451–cysteine 460, cysteine 467–cysteine 478, cysteine 472–cysteine 487, and cysteine 489–cysteine 498. 3 consecutive EGF-like domains span residues 204 to 237 (SDPI…PSCS), 241 to 268 (HYPG…LFCN), and 270 to 308 (DLNY…TNCE). The EGF-like 4; calcium-binding domain maps to 310-346 (EINECDCNPCKNGGSCNDLENDYSCTCPQGFYGKNCE). EGF-like domains lie at 348–385 (IAMT…SNCE) and 387–423 (RLDR…SRCE). Residues 425–461 (NIDDCARYPCQNAGTCQDGINDYTCTCTLGFTGKNCS) enclose the EGF-like 7; calcium-binding domain. An N-linked (GlcNAc...) asparagine glycan is attached at asparagine 459. The EGF-like 8 domain occupies 463–499 (RADACLTNPCLHGGTCFTHFSGPVCQCVPGFMGSTCE). The helical transmembrane segment at 523 to 543 (VSCVLGVLAVFLGVCVGLVVL) threads the bilayer. The Cytoplasmic segment spans residues 544–615 (RRRRHRLRRQ…FLWSAGGGLR (72 aa)).

In terms of processing, ubiquitinated by mib, leading to its endocytosis and subsequent degradation.

The protein resides in the membrane. Acts as a ligand for Notch receptors and is involved in primary neurogenesis. Can activate Notch receptors, thereby playing a key role in lateral inhibition, a process that prevents the immediate neighbors of each nascent neural cell from simultaneously embarking on neural differentiation. In Danio rerio (Zebrafish), this protein is Delta-like protein B (dlb).